Reading from the N-terminus, the 425-residue chain is SWI5-dependent HO expression protein 3 (425 aa).

The tract at residues 24-45 is disordered; that stretch reads NLESSPTKDRNTSSQNASSSRV. Polar residues predominate over residues 35–45; that stretch reads TSSQNASSSRV. Positions 68–197 form a coiled coil; that stretch reads QNLLSKLELA…LELSNQNLNY (130 aa). The tract at residues 322-425 is disordered; sequence RKTPNTNDSS…NSMVVHGAQS (104 aa). The span at 326 to 338 shows a compositional bias: low complexity; sequence NTNDSSSNGNSSN. Position 343 is a phosphoserine (Ser-343). Composition is skewed to polar residues over residues 345-358 and 382-397; these read YTAS…SIPK and KTNV…SPTI. Ser-394 is subject to Phosphoserine.

The protein belongs to the SHE3 family. Interacts with SHE2 and MYO4.

It is found in the endoplasmic reticulum membrane. RNA-binding protein that binds specific mRNAs including the ASH1 mRNA, coding for a repressor of the HO endonuclease. Part of the mRNA localization machinery that restricts accumulation of certain proteins to the bud and in the daughter cell. Required for the delivery of cortical endoplasmic reticulum into the emerging bud. The protein is SWI5-dependent HO expression protein 3 (SHE3) of Saccharomyces cerevisiae (strain ATCC 204508 / S288c) (Baker's yeast).